The following is a 30-amino-acid chain: Nattererin-1 (30 aa).

As to expression, expressed by the skin glands.

It is found in the secreted. In terms of biological role, probably has antibacterial activity. The sequence is that of Nattererin-1 from Physalaemus nattereri (Cuyaba dwarf frog).